The following is a 261-amino-acid chain: 5'-nucleotidase SurE (261 aa).

The a divalent metal cation site is built by Asp8, Asp9, Ser43, and Asn96.

It belongs to the SurE nucleotidase family. Requires a divalent metal cation as cofactor.

It is found in the cytoplasm. It carries out the reaction a ribonucleoside 5'-phosphate + H2O = a ribonucleoside + phosphate. Nucleotidase that shows phosphatase activity on nucleoside 5'-monophosphates. The chain is 5'-nucleotidase SurE from Dinoroseobacter shibae (strain DSM 16493 / NCIMB 14021 / DFL 12).